Here is a 558-residue protein sequence, read N- to C-terminus: Membrane protein insertase YidC (558 aa).

5 consecutive transmembrane segments (helical) span residues 3-23 (IKRTVLWVIFFMSAVMLFDNW), 364-384 (FVGNWGWAIVLLTLLIKAVFF), 438-458 (LPVVIQIPVFISLYWVLLASV), 477-497 (PYFILPVLMAVSMFVQTKLNP), and 508-528 (MMFMPIAFSVMFFFFPAGLVL).

It belongs to the OXA1/ALB3/YidC family. Type 1 subfamily. As to quaternary structure, interacts with the Sec translocase complex via SecD. Specifically interacts with transmembrane segments of nascent integral membrane proteins during membrane integration.

The protein localises to the cell inner membrane. Required for the insertion and/or proper folding and/or complex formation of integral membrane proteins into the membrane. Involved in integration of membrane proteins that insert both dependently and independently of the Sec translocase complex, as well as at least some lipoproteins. Aids folding of multispanning membrane proteins. The sequence is that of Membrane protein insertase YidC from Burkholderia pseudomallei (strain 668).